A 227-amino-acid polypeptide reads, in one-letter code: Small ribosomal subunit protein uS3 (227 aa).

The region spanning 39 to 107 (VREFLDKRLV…PVHINIEEVR (69 aa)) is the KH type-2 domain.

Belongs to the universal ribosomal protein uS3 family. In terms of assembly, part of the 30S ribosomal subunit. Forms a tight complex with proteins S10 and S14.

Its function is as follows. Binds the lower part of the 30S subunit head. Binds mRNA in the 70S ribosome, positioning it for translation. This is Small ribosomal subunit protein uS3 from Marinobacter nauticus (strain ATCC 700491 / DSM 11845 / VT8) (Marinobacter aquaeolei).